The primary structure comprises 443 residues: tRNA modification GTPase MnmE (443 aa).

Residues Arg19, Glu78, and Lys118 each contribute to the (6S)-5-formyl-5,6,7,8-tetrahydrofolate site. The region spanning 214-366 is the TrmE-type G domain; it reads GFKIAIIGPT…LISKIKNKLK (153 aa). Asn224 serves as a coordination point for K(+). GTP-binding positions include 224–229, 243–249, and 268–271; these read NAGKSS, SEIAGTT, and DTAG. Residue Ser228 participates in Mg(2+) binding. K(+) is bound by residues Ser243, Ile245, and Thr248. Mg(2+) is bound at residue Thr249. Lys443 is a (6S)-5-formyl-5,6,7,8-tetrahydrofolate binding site.

It belongs to the TRAFAC class TrmE-Era-EngA-EngB-Septin-like GTPase superfamily. TrmE GTPase family. Homodimer. Heterotetramer of two MnmE and two MnmG subunits. It depends on K(+) as a cofactor.

The protein resides in the cytoplasm. Functionally, exhibits a very high intrinsic GTPase hydrolysis rate. Involved in the addition of a carboxymethylaminomethyl (cmnm) group at the wobble position (U34) of certain tRNAs, forming tRNA-cmnm(5)s(2)U34. The chain is tRNA modification GTPase MnmE from Pelagibacter ubique (strain HTCC1062).